A 115-amino-acid polypeptide reads, in one-letter code: Replication initiation control protein YabA (115 aa).

Histidine 85, cysteine 87, cysteine 101, and cysteine 104 together coordinate Zn(2+).

This sequence belongs to the YabA family. As to quaternary structure, homotetramer. Interacts with both DnaA and DnaN, acting as a bridge between these two proteins. Zn(2+) serves as cofactor.

The protein localises to the cytoplasm. The protein resides in the nucleoid. Functionally, involved in control of chromosome replication initiation. Inhibits the cooperative binding of DnaA to the oriC region, thus negatively regulating initiation of chromosome replication. Inhibits the ability of DnaA-ATP to form a helix on DNA; does not disassemble preformed DnaA-DNA helices. Decreases the residence time of DnaA on the chromosome at its binding sites (oriC, replication forks and promoter-binding sites). Tethers DnaA to the replication machinery via the DNA polymerase beta sliding clamp subunit (dnaN). Associates with oriC and other DnaA targets on the chromosome in a DnaA-dependent manner. In Lactiplantibacillus plantarum (strain ATCC BAA-793 / NCIMB 8826 / WCFS1) (Lactobacillus plantarum), this protein is Replication initiation control protein YabA.